Reading from the N-terminus, the 265-residue chain is NAD kinase (265 aa).

Residue Asp-45 is the Proton acceptor of the active site. Residues 45-46 (DG), 122-123 (NE), Arg-148, Asp-150, 161-166 (TAYNKS), Ala-185, and Gln-223 each bind NAD(+).

Belongs to the NAD kinase family. Requires a divalent metal cation as cofactor.

Its subcellular location is the cytoplasm. It catalyses the reaction NAD(+) + ATP = ADP + NADP(+) + H(+). Its function is as follows. Involved in the regulation of the intracellular balance of NAD and NADP, and is a key enzyme in the biosynthesis of NADP. Catalyzes specifically the phosphorylation on 2'-hydroxyl of the adenosine moiety of NAD to yield NADP. This chain is NAD kinase, found in Enterococcus faecalis (strain ATCC 700802 / V583).